Here is a 359-residue protein sequence, read N- to C-terminus: Fructose-bisphosphate aldolase (359 aa).

Position 62 (serine 62) interacts with D-glyceraldehyde 3-phosphate. The Proton donor role is filled by aspartate 110. The Zn(2+) site is built by histidine 111, aspartate 145, glutamate 175, and histidine 227. Glycine 228 is a binding site for dihydroxyacetone phosphate. Histidine 265 is a Zn(2+) binding site. Dihydroxyacetone phosphate-binding positions include 266-268 (GGS) and 287-290 (NIDT).

This sequence belongs to the class II fructose-bisphosphate aldolase family. Homodimer. Zn(2+) serves as cofactor.

The catalysed reaction is beta-D-fructose 1,6-bisphosphate = D-glyceraldehyde 3-phosphate + dihydroxyacetone phosphate. The protein operates within carbohydrate degradation; glycolysis; D-glyceraldehyde 3-phosphate and glycerone phosphate from D-glucose: step 4/4. Functionally, catalyzes the aldol condensation of dihydroxyacetone phosphate (DHAP or glycerone-phosphate) with glyceraldehyde 3-phosphate (G3P) to form fructose 1,6-bisphosphate (FBP) in gluconeogenesis and the reverse reaction in glycolysis. This chain is Fructose-bisphosphate aldolase (fba), found in Haemophilus influenzae (strain ATCC 51907 / DSM 11121 / KW20 / Rd).